A 208-amino-acid polypeptide reads, in one-letter code: Imidazole glycerol phosphate synthase subunit HisH (208 aa).

Residues 1–206 enclose the Glutamine amidotransferase type-1 domain; sequence MIVIIDYDTG…KEVIRSCKSS (206 aa). Cys79 functions as the Nucleophile in the catalytic mechanism. Catalysis depends on residues His181 and Glu183.

In terms of assembly, heterodimer of HisH and HisF.

Its subcellular location is the cytoplasm. It carries out the reaction 5-[(5-phospho-1-deoxy-D-ribulos-1-ylimino)methylamino]-1-(5-phospho-beta-D-ribosyl)imidazole-4-carboxamide + L-glutamine = D-erythro-1-(imidazol-4-yl)glycerol 3-phosphate + 5-amino-1-(5-phospho-beta-D-ribosyl)imidazole-4-carboxamide + L-glutamate + H(+). The catalysed reaction is L-glutamine + H2O = L-glutamate + NH4(+). It functions in the pathway amino-acid biosynthesis; L-histidine biosynthesis; L-histidine from 5-phospho-alpha-D-ribose 1-diphosphate: step 5/9. Functionally, IGPS catalyzes the conversion of PRFAR and glutamine to IGP, AICAR and glutamate. The HisH subunit catalyzes the hydrolysis of glutamine to glutamate and ammonia as part of the synthesis of IGP and AICAR. The resulting ammonia molecule is channeled to the active site of HisF. This is Imidazole glycerol phosphate synthase subunit HisH from Listeria monocytogenes serotype 4b (strain CLIP80459).